The following is a 221-amino-acid chain: ATP synthase subunit a 1 (221 aa).

5 helical membrane-spanning segments follow: residues 20–40 (LTIV…ALIT), 78–98 (YLPF…CTVI), 108–128 (LSTT…FGIA), 174–194 (MILV…MNIL), and 196–216 (LLTG…YIAA).

It belongs to the ATPase A chain family. F-type ATPases have 2 components, CF(1) - the catalytic core - and CF(0) - the membrane proton channel. CF(1) has five subunits: alpha(3), beta(3), gamma(1), delta(1), epsilon(1). CF(0) has four main subunits: a, b, b' and c.

The protein resides in the cell inner membrane. Its function is as follows. Key component of the proton channel; it plays a direct role in the translocation of protons across the membrane. This is ATP synthase subunit a 1 from Chlorobaculum tepidum (strain ATCC 49652 / DSM 12025 / NBRC 103806 / TLS) (Chlorobium tepidum).